Consider the following 379-residue polypeptide: Succinyl-diaminopimelate desuccinylase (379 aa).

Residue H70 coordinates Zn(2+). D72 is an active-site residue. A Zn(2+)-binding site is contributed by D103. Residue E137 is the Proton acceptor of the active site. Zn(2+) contacts are provided by E138, E166, and H352.

Belongs to the peptidase M20A family. DapE subfamily. As to quaternary structure, homodimer. The cofactor is Zn(2+). It depends on Co(2+) as a cofactor.

It catalyses the reaction N-succinyl-(2S,6S)-2,6-diaminopimelate + H2O = (2S,6S)-2,6-diaminopimelate + succinate. The protein operates within amino-acid biosynthesis; L-lysine biosynthesis via DAP pathway; LL-2,6-diaminopimelate from (S)-tetrahydrodipicolinate (succinylase route): step 3/3. In terms of biological role, catalyzes the hydrolysis of N-succinyl-L,L-diaminopimelic acid (SDAP), forming succinate and LL-2,6-diaminopimelate (DAP), an intermediate involved in the bacterial biosynthesis of lysine and meso-diaminopimelic acid, an essential component of bacterial cell walls. In Burkholderia cenocepacia (strain ATCC BAA-245 / DSM 16553 / LMG 16656 / NCTC 13227 / J2315 / CF5610) (Burkholderia cepacia (strain J2315)), this protein is Succinyl-diaminopimelate desuccinylase.